The chain runs to 373 residues: Probable tRNA sulfurtransferase (373 aa).

The 105-residue stretch at 54-158 folds into the THUMP domain; that stretch reads NKNIEELSKV…NDVAYFYHKI (105 aa). ATP is bound by residues 176-177, 201-202, Lys-256, Gly-278, and Gln-287; these read LF and NF.

This sequence belongs to the ThiI family.

It localises to the cytoplasm. The catalysed reaction is [ThiI sulfur-carrier protein]-S-sulfanyl-L-cysteine + a uridine in tRNA + 2 reduced [2Fe-2S]-[ferredoxin] + ATP + H(+) = [ThiI sulfur-carrier protein]-L-cysteine + a 4-thiouridine in tRNA + 2 oxidized [2Fe-2S]-[ferredoxin] + AMP + diphosphate. It carries out the reaction [ThiS sulfur-carrier protein]-C-terminal Gly-Gly-AMP + S-sulfanyl-L-cysteinyl-[cysteine desulfurase] + AH2 = [ThiS sulfur-carrier protein]-C-terminal-Gly-aminoethanethioate + L-cysteinyl-[cysteine desulfurase] + A + AMP + 2 H(+). It participates in cofactor biosynthesis; thiamine diphosphate biosynthesis. Functionally, catalyzes the ATP-dependent transfer of a sulfur to tRNA to produce 4-thiouridine in position 8 of tRNAs, which functions as a near-UV photosensor. Also catalyzes the transfer of sulfur to the sulfur carrier protein ThiS, forming ThiS-thiocarboxylate. This is a step in the synthesis of thiazole, in the thiamine biosynthesis pathway. The sulfur is donated as persulfide by IscS. The chain is Probable tRNA sulfurtransferase from Saccharolobus islandicus (strain M.14.25 / Kamchatka #1) (Sulfolobus islandicus).